The sequence spans 564 residues: Acetylcholine receptor subunit alpha-type deg-3 (564 aa).

The N-terminal stretch at 1–20 (MTLKIRTIIILFCVISVTTT) is a signal peptide. At 21-268 (SQSLNATLKT…SLVIQRKPLY (248 aa)) the chain is on the extracellular side. Residues asparagine 25, asparagine 37, asparagine 125, and asparagine 198 are each glycosylated (N-linked (GlcNAc...) asparagine). 2 disulfides stabilise this stretch: cysteine 185–cysteine 199 and cysteine 248–cysteine 249. 3 helical membrane passes run 269 to 289 (YLVN…TGFF), 302 to 319 (INLG…MLMV), and 329 to 353 (FVPL…LTSV). Topologically, residues 354-526 (VLSVQGRRQY…WEFLATVLDR (173 aa)) are cytoplasmic. The helical transmembrane segment at 527-547 (FLLIVFVGAVVIVTAGLILVG) threads the bilayer.

The protein belongs to the ligand-gated ion channel (TC 1.A.9) family. Acetylcholine receptor (TC 1.A.9.1) subfamily. The functional receptor is a heteromer of deg-3 and des-2. Interacts with ric-3; which is required for proper receptor folding.

It is found in the postsynaptic cell membrane. Its subcellular location is the cell membrane. Functionally, subunit of the non-synaptic neuronal acetylcholine receptor, which may play a role in chemotaxis towards choline. After binding choline or acetylcholine, the AChR responds by an extensive change in conformation that affects all subunits and leads to opening of an ion-conducting channel across the plasma membrane. The chain is Acetylcholine receptor subunit alpha-type deg-3 (deg-3) from Caenorhabditis elegans.